Here is a 326-residue protein sequence, read N- to C-terminus: Aspartate carbamoyltransferase catalytic subunit (326 aa).

Residues Arg65 and Thr66 each contribute to the carbamoyl phosphate site. Lys93 provides a ligand contact to L-aspartate. Residues Arg115, His143, and Gln146 each coordinate carbamoyl phosphate. Arg176 and Arg230 together coordinate L-aspartate. Carbamoyl phosphate contacts are provided by Gly271 and Pro272.

The protein belongs to the aspartate/ornithine carbamoyltransferase superfamily. ATCase family. Heterododecamer (2C3:3R2) of six catalytic PyrB chains organized as two trimers (C3), and six regulatory PyrI chains organized as three dimers (R2).

It carries out the reaction carbamoyl phosphate + L-aspartate = N-carbamoyl-L-aspartate + phosphate + H(+). It participates in pyrimidine metabolism; UMP biosynthesis via de novo pathway; (S)-dihydroorotate from bicarbonate: step 2/3. Catalyzes the condensation of carbamoyl phosphate and aspartate to form carbamoyl aspartate and inorganic phosphate, the committed step in the de novo pyrimidine nucleotide biosynthesis pathway. This Mesorhizobium japonicum (strain LMG 29417 / CECT 9101 / MAFF 303099) (Mesorhizobium loti (strain MAFF 303099)) protein is Aspartate carbamoyltransferase catalytic subunit.